A 280-amino-acid chain; its full sequence is Four and a half LIM domains protein 3 (280 aa).

Ser2 carries the N-acetylserine modification. A C4-type zinc finger spans residues Cys7–Cys31. 2 LIM zinc-binding domains span residues Cys40–Cys92 and Cys101–Cys153. Lys157 carries the N6-acetyllysine modification. LIM zinc-binding domains are found at residues Cys162–Cys212 and Cys221–Cys275. Lys235 is modified (N6-acetyllysine).

Interacts with SOX15; the interaction recruits FHL3 to FOXK1 promoters where it acts as a transcriptional coactivator of FOXK1.

Its subcellular location is the nucleus. It localises to the cytoplasm. Its function is as follows. Recruited by SOX15 to FOXK1 promoters where it acts as a transcriptional coactivator of FOXK1. In Bos taurus (Bovine), this protein is Four and a half LIM domains protein 3 (FHL3).